We begin with the raw amino-acid sequence, 491 residues long: Protein DETOXIFICATION 28 (491 aa).

The next 12 helical transmembrane spans lie at 47 to 67 (IVGPAIFTRVTTNLIFVITQA), 77 to 97 (LAAISIVNNVIIGFNYSLFIG), 127 to 147 (IVLFLFSILLLPMYIFATPIL), 160 to 180 (SGIISVWAIPTHFSFAFFFPI), 192 to 212 (VIAISSGVSLVVHIFVCWLFV), 228 to 248 (VSWWLNVFILFTYTTCGGCPL), 272 to 292 (GIMVCLENWYYRMLIVMTGNL), 302 to 322 (MSICMSINGLEMMVPLAFFAG), 352 to 372 (IIGIIISVLIYFLLDQIGWMF), 387 to 407 (ILLSFAILLNSVQPVLSGVAV), 414 to 434 (LVAFINLGCYYFIGLPLGIVM), and 444 to 464 (GIWAGMIFGGTMVQTLILIFI).

This sequence belongs to the multi antimicrobial extrusion (MATE) (TC 2.A.66.1) family.

It is found in the membrane. In Arabidopsis thaliana (Mouse-ear cress), this protein is Protein DETOXIFICATION 28.